A 515-amino-acid polypeptide reads, in one-letter code: Maturase K (515 aa).

Belongs to the intron maturase 2 family. MatK subfamily.

The protein localises to the plastid. It is found in the chloroplast. Usually encoded in the trnK tRNA gene intron. Probably assists in splicing its own and other chloroplast group II introns. In Pinus roxburghii (Chir pine), this protein is Maturase K.